The sequence spans 330 residues: Aquaporin-3 (330 aa).

The Cytoplasmic segment spans residues M1–E40. A helical membrane pass occupies residues A41–G61. The Extracellular segment spans residues N62 to S71. The chain crosses the membrane as a helical span at residues V72–A92. Residues T93–Q124 are Cytoplasmic-facing. The NPA 1 signature appears at N99–C101. Residues I125–E145 traverse the membrane as a helical segment. The Extracellular segment spans residues S146–E157. A helical membrane pass occupies residues T158–A178. Over Q179–R183 the chain is Cytoplasmic. Residues A184–D204 form a helical membrane-spanning segment. The Extracellular segment spans residues P205 to S207. The helical transmembrane segment at F208 to W228 threads the bilayer. At G229–A264 the chain is on the cytoplasmic side. The NPA 2 motif lies at N238–A240. Residues I265 to L285 traverse the membrane as a helical segment. Topologically, residues V286–V330 are extracellular. Positions R308–V330 are disordered. Acidic residues predominate over residues E314–S324.

Belongs to the MIP/aquaporin (TC 1.A.8) family.

Its subcellular location is the cell membrane. The catalysed reaction is H2O(in) = H2O(out). It catalyses the reaction CO2(out) = CO2(in). Water channel required to facilitate the transport of water across membranes. Also mediates the transport of carbon dioxide across the membrane. This Laccaria bicolor (Bicoloured deceiver) protein is Aquaporin-3.